The sequence spans 360 residues: Protein RecA (360 aa).

64–71 is an ATP binding site; it reads GHESSGKT. The segment at 333 to 360 is disordered; that stretch reads QEQVQPEPKSKQSKSKQASEQATQDELI.

Belongs to the RecA family.

The protein localises to the cytoplasm. Functionally, can catalyze the hydrolysis of ATP in the presence of single-stranded DNA, the ATP-dependent uptake of single-stranded DNA by duplex DNA, and the ATP-dependent hybridization of homologous single-stranded DNAs. It interacts with LexA causing its activation and leading to its autocatalytic cleavage. This is Protein RecA from Francisella philomiragia subsp. philomiragia (strain ATCC 25017 / CCUG 19701 / FSC 153 / O#319-036).